A 218-amino-acid polypeptide reads, in one-letter code: Pyridoxine/pyridoxamine 5'-phosphate oxidase (218 aa).

Substrate-binding positions include 14–17 and K72; that span reads RREY. FMN contacts are provided by residues 67–72, 82–83, R88, K89, and Q111; these read RIVLLK and YT. Residues Y129, R133, and S137 each contribute to the substrate site. FMN-binding positions include 146–147 and W191; that span reads QS. 197–199 is a substrate binding site; that stretch reads RLH. R201 is an FMN binding site.

Belongs to the pyridoxamine 5'-phosphate oxidase family. In terms of assembly, homodimer. It depends on FMN as a cofactor.

It carries out the reaction pyridoxamine 5'-phosphate + O2 + H2O = pyridoxal 5'-phosphate + H2O2 + NH4(+). The catalysed reaction is pyridoxine 5'-phosphate + O2 = pyridoxal 5'-phosphate + H2O2. It functions in the pathway cofactor metabolism; pyridoxal 5'-phosphate salvage; pyridoxal 5'-phosphate from pyridoxamine 5'-phosphate: step 1/1. It participates in cofactor metabolism; pyridoxal 5'-phosphate salvage; pyridoxal 5'-phosphate from pyridoxine 5'-phosphate: step 1/1. In terms of biological role, catalyzes the oxidation of either pyridoxine 5'-phosphate (PNP) or pyridoxamine 5'-phosphate (PMP) into pyridoxal 5'-phosphate (PLP). The chain is Pyridoxine/pyridoxamine 5'-phosphate oxidase from Escherichia coli O7:K1 (strain IAI39 / ExPEC).